The following is a 103-amino-acid chain: Nucleoid-associated protein Cgl0243/cg0297 (103 aa).

It belongs to the YbaB/EbfC family. In terms of assembly, homodimer.

The protein resides in the cytoplasm. Its subcellular location is the nucleoid. Functionally, binds to DNA and alters its conformation. May be involved in regulation of gene expression, nucleoid organization and DNA protection. This Corynebacterium glutamicum (strain ATCC 13032 / DSM 20300 / JCM 1318 / BCRC 11384 / CCUG 27702 / LMG 3730 / NBRC 12168 / NCIMB 10025 / NRRL B-2784 / 534) protein is Nucleoid-associated protein Cgl0243/cg0297.